Here is a 436-residue protein sequence, read N- to C-terminus: Serine hydroxymethyltransferase (436 aa).

(6S)-5,6,7,8-tetrahydrofolate-binding positions include Leu-133 and Gly-137 to Ile-139. N6-(pyridoxal phosphate)lysine is present on Lys-242.

Belongs to the SHMT family. In terms of assembly, homodimer. Pyridoxal 5'-phosphate is required as a cofactor.

It localises to the cytoplasm. It catalyses the reaction (6R)-5,10-methylene-5,6,7,8-tetrahydrofolate + glycine + H2O = (6S)-5,6,7,8-tetrahydrofolate + L-serine. Its pathway is one-carbon metabolism; tetrahydrofolate interconversion. It functions in the pathway amino-acid biosynthesis; glycine biosynthesis; glycine from L-serine: step 1/1. In terms of biological role, catalyzes the reversible interconversion of serine and glycine with tetrahydrofolate (THF) serving as the one-carbon carrier. This reaction serves as the major source of one-carbon groups required for the biosynthesis of purines, thymidylate, methionine, and other important biomolecules. Also exhibits THF-independent aldolase activity toward beta-hydroxyamino acids, producing glycine and aldehydes, via a retro-aldol mechanism. The protein is Serine hydroxymethyltransferase of Pelagibacter ubique (strain HTCC1062).